We begin with the raw amino-acid sequence, 164 residues long: UPF0304 protein MS2240 (164 aa).

The protein belongs to the UPF0304 family.

This Mannheimia succiniciproducens (strain KCTC 0769BP / MBEL55E) protein is UPF0304 protein MS2240.